A 533-amino-acid chain; its full sequence is Putative amidase C550.07 (533 aa).

Active-site charge relay system residues include Lys-132 and Ser-207. The Acyl-ester intermediate role is filled by Ser-231.

This sequence belongs to the amidase family.

It is found in the cytoplasm. Its subcellular location is the nucleus. The enzyme catalyses a monocarboxylic acid amide + H2O = a monocarboxylate + NH4(+). This Schizosaccharomyces pombe (strain 972 / ATCC 24843) (Fission yeast) protein is Putative amidase C550.07.